Reading from the N-terminus, the 630-residue chain is Putative F-box/LRR-repeat protein At3g49150 (630 aa).

The 49-residue stretch at 15–63 (KDIISDLPEALICHILSFLPIEDSALTSVLSKKWQHLFAFRPNLEFDDA) folds into the F-box domain. LRR repeat units lie at residues 101 to 129 (CRDF…DLRC), 152 to 178 (RIET…YLNK), 180 to 205 (LLRH…FIMN), 228 to 253 (CEDV…VYHD), 300 to 325 (ISNV…QIPV), 337 to 362 (DQKA…IFDG), 406 to 436 (CDDY…KLFY), 437 to 465 (DTQI…FNAR), and 567 to 590 (DSSI…GLNW).

This is Putative F-box/LRR-repeat protein At3g49150 from Arabidopsis thaliana (Mouse-ear cress).